The following is a 196-amino-acid chain: MTWQNDYSRDYEVKNHMECQNRSDKYIWSPHDAYFYKGLSELIVDIDRLIYLSLEKIRKDFVFINLNTDSLTEFINRDNEWLSAVKGKQVVLIAARKSEALANYWYYNSNIRGVVYAGLSRDIRKELAYVINGRFLRKDIKKDKITDREMEIIRMTAQGMLPKSIARIENCSVKTVYTHRRNAEAKLYSKIYKLVP.

The HTH luxR-type domain maps to 138 to 196; it reads KDIKKDKITDREMEIIRMTAQGMLPKSIARIENCSVKTVYTHRRNAEAKLYSKIYKLVP. The H-T-H motif DNA-binding region spans 162-181; it reads PKSIARIENCSVKTVYTHRR.

Belongs to the EcpR/MatA family.

The protein resides in the cytoplasm. Functionally, part of the ecpRABCDE operon, which encodes the E.coli common pilus (ECP). ECP is found in both commensal and pathogenic strains and plays a dual role in early-stage biofilm development and host cell recognition. Positively regulates the expression of the ecp operon. The chain is HTH-type transcriptional regulator EcpR (ecpR) from Escherichia coli O17:K52:H18 (strain UMN026 / ExPEC).